We begin with the raw amino-acid sequence, 110 residues long: Chorion class B protein M2410 (110 aa).

Tandem repeats lie at residues 1–4 (YGGL), 5–9 (GYGGL), 10–14 (GYGGL), and 15–19 (GYGGL). The segment at 1 to 19 (YGGLGYGGLGYGGLGYGGL) is 4 X 5 AA tandem repeats of G-Y-G-G-L. A left arm region spans residues 1 to 27 (YGGLGYGGLGYGGLGYGGLGGGCGRGF). The segment at 28–96 (SGGGLPVATA…GNGDVGITRE (69 aa)) is central domain. Positions 97 to 110 (GGLGYGAGYGGGYG) are right arm (Gly-rich tandem repeats).

It belongs to the chorion protein family.

Its function is as follows. This protein is one of many from the eggshell of the silk moth. In Bombyx mori (Silk moth), this protein is Chorion class B protein M2410.